Reading from the N-terminus, the 121-residue chain is Large ribosomal subunit protein bL12 (121 aa).

Belongs to the bacterial ribosomal protein bL12 family. Homodimer. Part of the ribosomal stalk of the 50S ribosomal subunit. Forms a multimeric L10(L12)X complex, where L10 forms an elongated spine to which 2 to 4 L12 dimers bind in a sequential fashion. Binds GTP-bound translation factors.

In terms of biological role, forms part of the ribosomal stalk which helps the ribosome interact with GTP-bound translation factors. Is thus essential for accurate translation. The chain is Large ribosomal subunit protein bL12 from Streptococcus agalactiae serotype Ia (strain ATCC 27591 / A909 / CDC SS700).